The following is a 592-amino-acid chain: Aspartate--tRNA ligase (592 aa).

An L-aspartate-binding site is contributed by Glu-173. Positions 197–200 (QLFK) are aspartate. Position 219 (Arg-219) interacts with L-aspartate. Residues 219-221 (RDE) and Gln-228 each bind ATP. Residue His-448 coordinates L-aspartate. An ATP-binding site is contributed by Glu-482. Arg-489 is a binding site for L-aspartate. Residue 534–537 (GLDR) participates in ATP binding.

It belongs to the class-II aminoacyl-tRNA synthetase family. Type 1 subfamily. In terms of assembly, homodimer.

It localises to the cytoplasm. The enzyme catalyses tRNA(Asp) + L-aspartate + ATP = L-aspartyl-tRNA(Asp) + AMP + diphosphate. Functionally, catalyzes the attachment of L-aspartate to tRNA(Asp) in a two-step reaction: L-aspartate is first activated by ATP to form Asp-AMP and then transferred to the acceptor end of tRNA(Asp). This chain is Aspartate--tRNA ligase, found in Shewanella putrefaciens (strain CN-32 / ATCC BAA-453).